Reading from the N-terminus, the 453-residue chain is Bifunctional protein GlmU (453 aa).

Residues 1–226 (MLDILILAAG…IQEVEGINNR (226 aa)) are pyrophosphorylase. Residues 7-10 (LAAG), K21, Q72, 77-78 (GT), 99-101 (YGD), G136, E151, N166, and N224 each bind UDP-N-acetyl-alpha-D-glucosamine. A Mg(2+)-binding site is contributed by D101. N224 serves as a coordination point for Mg(2+). A linker region spans residues 227 to 247 (QQQATLERYYQQQQARALMDA). Residues 248-453 (GVTLLDPARF…QGWERPTRKS (206 aa)) form an N-acetyltransferase region. Residues R330 and K348 each contribute to the UDP-N-acetyl-alpha-D-glucosamine site. The Proton acceptor role is filled by H360. 2 residues coordinate UDP-N-acetyl-alpha-D-glucosamine: Y363 and N374. Acetyl-CoA is bound by residues A377, 383 to 384 (NY), S402, A420, and R437.

In the N-terminal section; belongs to the N-acetylglucosamine-1-phosphate uridyltransferase family. The protein in the C-terminal section; belongs to the transferase hexapeptide repeat family. Homotrimer. It depends on Mg(2+) as a cofactor.

Its subcellular location is the cytoplasm. The catalysed reaction is alpha-D-glucosamine 1-phosphate + acetyl-CoA = N-acetyl-alpha-D-glucosamine 1-phosphate + CoA + H(+). It carries out the reaction N-acetyl-alpha-D-glucosamine 1-phosphate + UTP + H(+) = UDP-N-acetyl-alpha-D-glucosamine + diphosphate. The protein operates within nucleotide-sugar biosynthesis; UDP-N-acetyl-alpha-D-glucosamine biosynthesis; N-acetyl-alpha-D-glucosamine 1-phosphate from alpha-D-glucosamine 6-phosphate (route II): step 2/2. Its pathway is nucleotide-sugar biosynthesis; UDP-N-acetyl-alpha-D-glucosamine biosynthesis; UDP-N-acetyl-alpha-D-glucosamine from N-acetyl-alpha-D-glucosamine 1-phosphate: step 1/1. It functions in the pathway bacterial outer membrane biogenesis; LPS lipid A biosynthesis. Its function is as follows. Catalyzes the last two sequential reactions in the de novo biosynthetic pathway for UDP-N-acetylglucosamine (UDP-GlcNAc). The C-terminal domain catalyzes the transfer of acetyl group from acetyl coenzyme A to glucosamine-1-phosphate (GlcN-1-P) to produce N-acetylglucosamine-1-phosphate (GlcNAc-1-P), which is converted into UDP-GlcNAc by the transfer of uridine 5-monophosphate (from uridine 5-triphosphate), a reaction catalyzed by the N-terminal domain. In Cellvibrio japonicus (strain Ueda107) (Pseudomonas fluorescens subsp. cellulosa), this protein is Bifunctional protein GlmU.